A 290-amino-acid chain; its full sequence is D-tagatose 3-epimerase (290 aa).

Position 66 (Cys-66) interacts with substrate. Glu-152 functions as the Proton donor/acceptor in the catalytic mechanism. Glu-152 provides a ligand contact to Mn(2+). Substrate-binding positions include Glu-158 and Asp-185–His-188. Asp-185 and His-211 together coordinate Mn(2+). Arg-217 contacts substrate. Glu-246 acts as the Proton donor/acceptor in catalysis. Mn(2+) is bound at residue Glu-246.

This sequence belongs to the hyi family. Homodimer. Mn(2+) is required as a cofactor.

It carries out the reaction keto-D-tagatose = keto-D-sorbose. The catalysed reaction is D-allulose = keto-D-fructose. It catalyses the reaction D-ribulose = D-xylulose. With respect to regulation, strongly inhibited (about 90% of the enzyme activity) by Ag(+), Hg(2+) and p-chloromercuribenzoic acid. Cu(2+) and Zn(2+) inhibit about 60% of the enzyme activity. Its function is as follows. Catalyzes the epimerization of various ketoses at the C(3) position. It is able to interconvert D-tagatose and D-ribulose to D-sorbose and D-xylulose, respectively. The enzyme is also able to accept other ketopentoses such as D-psicose with lower efficiency. The sequence is that of D-tagatose 3-epimerase from Pseudomonas cichorii.